Consider the following 20-residue polypeptide: Pregnancy-associated glycoprotein 61C (20 aa).

This sequence belongs to the peptidase A1 family. Post-translationally, N-glycosylated. As to expression, expressed in chorionic epithelium (trophectoderm).

It localises to the secreted. The protein resides in the extracellular space. This chain is Pregnancy-associated glycoprotein 61C, found in Bubalus bubalis (Domestic water buffalo).